The following is a 681-amino-acid chain: Probable glutamate carboxypeptidase LAMP1 (681 aa).

Topologically, residues 1–6 (MSKSKS) are cytoplasmic. The helical; Signal-anchor for type II membrane protein transmembrane segment at 7–24 (LAFVIAALSYSFFSLFSS) threads the bilayer. The Extracellular segment spans residues 25 to 681 (PPKSHYHELF…ASLVLKGELI (657 aa)). Residues N42, N140, N166, and N299 are each glycosylated (N-linked (GlcNAc...) asparagine). Residues 241–527 (SVDGCERLSD…SVLGLVALRL (287 aa)) are catalytic. Residues H333 and D343 each coordinate Zn(2+). The Nucleophile role is filled by E380. Zn(2+) contacts are provided by E381 and D409. An N-linked (GlcNAc...) asparagine glycan is attached at N441. H493 provides a ligand contact to Zn(2+). An N-linked (GlcNAc...) asparagine glycan is attached at N536.

This sequence belongs to the peptidase M28 family. M28B subfamily. Zn(2+) serves as cofactor.

The protein localises to the endoplasmic reticulum membrane. The enzyme catalyses Release of an unsubstituted, C-terminal glutamyl residue, typically from Ac-Asp-Glu or folylpoly-gamma-glutamates.. Its function is as follows. Acts in association with AMP1 to suppress ectopic stem cell niche formation in the shoot apical meristem (SAM) independently of cytokinin signaling pathway. The polypeptide is Probable glutamate carboxypeptidase LAMP1 (Arabidopsis thaliana (Mouse-ear cress)).